The sequence spans 350 residues: MATMVAQKLSHLLPSLRQVHPEPQPSVHPEPVFTVDRAEVPPLFWKPYIYVGYRPLHQTWRFYFRTLFQQHNEAVNVWTHLLAALVLLLRLAIFVGTVDFWGDPHALPLFIIVLASFTYLSLSALAHLLQAKSEFWHYSFFFLDYVGVAVYQFGSALAHFYYAIEPAWHAQVQTIFLPMAAFLAWLSCTGSCYNKYIQKPGLLGRTCQEVPSALAYALDISPVAHRILASPEPATDDPALLYHKCQVVFFLLAAAFFSAFMPERWFPGSCHIFGQGHQLFHVFLVLCTLAQLEAVALDYEARRPIYEPLHTRWPHNFSGLFLLTVGSSILTAFLLSQLVRRKLDLDRKTQ.

Over 1-80 the chain is Cytoplasmic; sequence MATMVAQKLS…HNEAVNVWTH (80 aa). A helical membrane pass occupies residues 81 to 101; it reads LLAALVLLLRLAIFVGTVDFW. Over 102–105 the chain is Extracellular; sequence GDPH. The helical transmembrane segment at 106–126 threads the bilayer; that stretch reads ALPLFIIVLASFTYLSLSALA. Topologically, residues 127-139 are cytoplasmic; it reads HLLQAKSEFWHYS. Residues 140–160 form a helical membrane-spanning segment; sequence FFFLDYVGVAVYQFGSALAHF. At 161–165 the chain is on the extracellular side; sequence YYAIE. A helical transmembrane segment spans residues 166-186; the sequence is PAWHAQVQTIFLPMAAFLAWL. The Cytoplasmic portion of the chain corresponds to 187 to 239; sequence SCTGSCYNKYIQKPGLLGRTCQEVPSALAYALDISPVAHRILASPEPATDDPA. Residues 240–260 form a helical membrane-spanning segment; sequence LLYHKCQVVFFLLAAAFFSAF. At 261-278 the chain is on the extracellular side; sequence MPERWFPGSCHIFGQGHQ. A helical membrane pass occupies residues 279 to 299; it reads LFHVFLVLCTLAQLEAVALDY. Residues 300-318 lie on the Cytoplasmic side of the membrane; that stretch reads EARRPIYEPLHTRWPHNFS. Residues 319–339 traverse the membrane as a helical segment; the sequence is GLFLLTVGSSILTAFLLSQLV. Residues 340–350 are Extracellular-facing; sequence RRKLDLDRKTQ.

The protein belongs to the ADIPOR family.

The protein resides in the cell membrane. Functionally, plasma membrane progesterone (P4) receptor coupled to G proteins. Seems to act through a G(i) mediated pathway. May be involved in oocyte maturation. Involved in neurosteroid inhibition of apoptosis. Also binds dehydroepiandrosterone (DHEA), pregnanolone, pregnenolone and allopregnanolone. In Sus scrofa (Pig), this protein is Membrane progestin receptor alpha (PAQR7).